The primary structure comprises 215 residues: Cytidylate kinase (215 aa).

Residue 10 to 18 coordinates ATP; that stretch reads GPAASGKGT.

It belongs to the cytidylate kinase family. Type 1 subfamily.

Its subcellular location is the cytoplasm. The enzyme catalyses CMP + ATP = CDP + ADP. It catalyses the reaction dCMP + ATP = dCDP + ADP. This Bartonella tribocorum (strain CIP 105476 / IBS 506) protein is Cytidylate kinase.